We begin with the raw amino-acid sequence, 638 residues long: Acetolactate synthase 1, chloroplastic (638 aa).

A compositionally biased stretch (low complexity) spans 1–19; that stretch reads MATAAAASTALTGATTAAP. Residues 1–23 are disordered; sequence MATAAAASTALTGATTAAPKARR. The N-terminal 39 residues, 1-39, are a transit peptide targeting the chloroplast; that stretch reads MATAAAASTALTGATTAAPKARRRAHLLATRRALAAPIR. Glutamate 112 contributes to the thiamine diphosphate binding site. A disulfide bond links cysteine 132 and cysteine 278. FAD is bound by residues arginine 214, 320–341, and 363–382; these read HGTV…LGVR and DIDP…ICAD. The segment at 455–535 is thiamine pyrophosphate binding; it reads QHQMWAAQYY…VKVFVLNNQH (81 aa). Mg(2+) contacts are provided by aspartate 506 and asparagine 533.

Belongs to the TPP enzyme family. Mg(2+) serves as cofactor. Requires thiamine diphosphate as cofactor.

It is found in the plastid. The protein resides in the chloroplast. The catalysed reaction is 2 pyruvate + H(+) = (2S)-2-acetolactate + CO2. The protein operates within amino-acid biosynthesis; L-isoleucine biosynthesis; L-isoleucine from 2-oxobutanoate: step 1/4. It participates in amino-acid biosynthesis; L-valine biosynthesis; L-valine from pyruvate: step 1/4. This chain is Acetolactate synthase 1, chloroplastic (ALS1), found in Zea mays (Maize).